A 557-amino-acid polypeptide reads, in one-letter code: NAC domain-containing protein 17 (557 aa).

The 151-residue stretch at 16-166 (SAPGFRFHPT…YYALYKLFKK (151 aa)) folds into the NAC domain. A DNA-binding region spans residues 115 to 172 (VGLKKTLVFYRGRAPSGERTDWVMHEYTMDEDELGRCKNPQEYYALYKLFKKSGAGPK). The helical transmembrane segment at 526 to 546 (FLLLSIVGALCAIFWVLVATV) threads the bilayer.

As to expression, expressed in roots, rosette leaves, cauline leaves, shoot apex, stems and flowers.

It localises to the endoplasmic reticulum membrane. It is found in the nucleus. Transcriptional activator activated by proteolytic cleavage through regulated intramembrane proteolysis (RIP). Transcriptional activator that acts as a positive regulator of AOX1A during mitochondrial dysfunction. Binds directly to AOX1A promoter. Mediates mitochondrial retrograde signaling. The polypeptide is NAC domain-containing protein 17 (Arabidopsis thaliana (Mouse-ear cress)).